The chain runs to 722 residues: Pentatricopeptide repeat-containing protein At4g14820 (722 aa).

PPR repeat units lie at residues 75–109, 110–140, 145–175, 176–210, 211–245, 246–276, 277–307, 308–342, 343–377, 378–408, 409–443, 444–479, and 480–514; these read ESIVFNPFLRDLSRSSEPRATILFYQRIRHVGGRL, DQFSFLPILKAVSKVSALFEGMELHGVAFKI, DPFVETGFMDMYASCGRINYARNVFDEMSHR, DVVTWNTMIERYCRFGLVDEAFKLFEEMKDSNVMP, DEMILCNIVSACGRTGNMRYNRAIYEFLIENDVRM, DTHLLTALVTMYAGAGCMDMAREFFRKMSVR, NLFVSTAMVSGYSKCGRLDDAQVIFDQTEKK, DLVCWTTMISAYVESDYPQEALRVFEEMCCSGIKP, DVVSMFSVISACANLGILDKAKWVHSCIHVNGLES, ELSINNALINMYAKCGGLDATRDVFEKMPRR, NVVSWSSMINALSMHGEASDALSLFARMKQENVEP, NEVTFVGVLYGCSHSGLVEEGKKIFASMTDEYNITP, and KLEHYGCMVDLFGRANLLREALEVIESMPVASNVV. The tract at residues 515–590 is type E motif; the sequence is IWGSLMSACR…EKGLSRIDQN (76 aa). Residues 591–621 form a type E(+) motif region; that stretch reads GKSHEFLIGDKRHKQSNEIYAKLDEVVSKLK. Residues 622 to 722 form a type DYW motif region; it reads LAGYVPDCGS…NGLCSCRDYW (101 aa).

Belongs to the PPR family. PCMP-H subfamily.

This Arabidopsis thaliana (Mouse-ear cress) protein is Pentatricopeptide repeat-containing protein At4g14820 (PCMP-H3).